The sequence spans 215 residues: Beta-crystallin A3 (215 aa).

Methionine 1 is modified (N-acetylmethionine). Residues 1 to 16 (METQAEQQELETLPTT) are compositionally biased toward low complexity. Residues 1–29 (METQAEQQELETLPTTKMAQTNPTPGSLG) are disordered. Positions 1 to 30 (METQAEQQELETLPTTKMAQTNPTPGSLGP) are N-terminal arm. Residue glutamate 2 is modified to N-acetylalanine. 2 Beta/gamma crystallin 'Greek key' domains span residues 31-70 (WKIT…KVES) and 71-117 (GAWI…RPIC). An S-glutathionyl cysteine; alternate mark is found at cysteine 82 and cysteine 117. S-methylcysteine; alternate is present on residues cysteine 82 and cysteine 117. Positions 118 to 123 (SANHKE) are connecting peptide. 2 Beta/gamma crystallin 'Greek key' domains span residues 124-165 (SKMT…KIQS) and 166-214 (GAWV…RRIQ). The residue at position 185 (cysteine 185) is an S-methylcysteine.

Belongs to the beta/gamma-crystallin family. In terms of assembly, homo/heterodimer, or complexes of higher-order. The structure of beta-crystallin oligomers seems to be stabilized through interactions between the N-terminal arms. Interacts with CRYBA1. Specific cleavages in the N-terminal arm occur during lens maturation and give rise to several truncated forms. Cleavages do not seem to have adverse effects on solubility. In terms of processing, S-methylation and glutathionylation occur in normal young lenses and do not seem to be detrimental.

Functionally, crystallins are the dominant structural components of the vertebrate eye lens. The sequence is that of Beta-crystallin A3 from Homo sapiens (Human).